The following is a 111-amino-acid chain: SIAFSRAVFSEFLATLLFVFFGLGSALNWPSTVPIPTVLQISMAFGLAIGTLVQTLGHISGAHINPAVTVACLVGCHVSFLRATFYVAAQLLGAVAGAALLHKLTPEDIRG.

At 1–6 the chain is on the cytoplasmic side; the sequence is SIAFSR. Residues 7 to 27 form a helical membrane-spanning segment; that stretch reads AVFSEFLATLLFVFFGLGSAL. At 28–37 the chain is on the extracellular side; it reads NWPSTVPIPT. Residues 38-56 form a helical membrane-spanning segment; the sequence is VLQISMAFGLAIGTLVQTL. Residues 57–61 are Cytoplasmic-facing; that stretch reads GHISG. Positions 62-71 form an intramembrane region, discontinuously helical; sequence AHINPAVTVA. Positions 65 to 67 match the NPA 1 motif; sequence NPA. Over 72-82 the chain is Cytoplasmic; it reads CLVGCHVSFLR. The chain crosses the membrane as a helical span at residues 83–104; the sequence is ATFYVAAQLLGAVAGAALLHKL. At 105 to 111 the chain is on the extracellular side; that stretch reads TPEDIRG.

Belongs to the MIP/aquaporin (TC 1.A.8) family. Homotetramer. Post-translationally, serine phosphorylation is necessary and sufficient for expression at the apical membrane. Endocytosis is not phosphorylation-dependent. In terms of processing, N-glycosylated.

It is found in the apical cell membrane. The protein resides in the basolateral cell membrane. Its subcellular location is the cell membrane. The protein localises to the cytoplasmic vesicle membrane. It localises to the golgi apparatus. It is found in the trans-Golgi network membrane. It catalyses the reaction H2O(in) = H2O(out). The enzyme catalyses glycerol(in) = glycerol(out). Forms a water-specific channel that provides the plasma membranes of renal collecting duct with high permeability to water, thereby permitting water to move in the direction of an osmotic gradient. Plays an essential role in renal water homeostasis. Could also be permeable to glycerol. This is Aquaporin-2 from Macroscelides proboscideus (Short-eared elephant shrew).